The chain runs to 282 residues: Tryptophan 2,3-dioxygenase (282 aa).

Substrate-binding positions include 51–55, Tyr-113, and Arg-117; that span reads FIIQH. Heme is bound at residue His-240. Position 254 (Thr-254) interacts with substrate.

This sequence belongs to the tryptophan 2,3-dioxygenase family. Homotetramer. Heme is required as a cofactor.

It catalyses the reaction L-tryptophan + O2 = N-formyl-L-kynurenine. It functions in the pathway amino-acid degradation; L-tryptophan degradation via kynurenine pathway; L-kynurenine from L-tryptophan: step 1/2. Its function is as follows. Heme-dependent dioxygenase that catalyzes the oxidative cleavage of the L-tryptophan (L-Trp) pyrrole ring and converts L-tryptophan to N-formyl-L-kynurenine. Catalyzes the oxidative cleavage of the indole moiety. The chain is Tryptophan 2,3-dioxygenase from Polaromonas naphthalenivorans (strain CJ2).